A 685-amino-acid polypeptide reads, in one-letter code: MAEWLLSASRQRRVKAMTAAAGSAGRAAVPFLLCALLAPGGAYVLDDSDGLGREFDGIGAVSGGGATSRLLVNYPEPYRSQILDYLFKPNFGASLHILKVEIGGDGQTTDGTEPSHMHYALDENYFRGYEWWLMKEAKKRNPNITLIGLPWSFPGWLGKGFDWPYVNLQLTAYYVVTWIVGAKRYHDLDIDYIGIWNERSYNANYIKILRKMLNSQGLQRVKIIASDNLWESISAAMLLDAELFKVVDVIGAHYPGTHSVKDARLTGKKLWSSEDFSTLNSDTGAGCWGRILNQNYVNGYMTSTIAWNLVASYYEQLPYGRCGLMTAQEPWSGHYVVESPVWVSAHTTQFTQPGWYYLKTVGHLEKGGSYVALTDGLGNLTIIIETMSHKHSKCIRPFLPYFNVSQQFATFVLKGSFSEIPELQVWYTKLGKTSERFLFKQLDSLWLLDSNGSFTLKLQEDELFTLTTLTTGRKGSYLPPPKSQRFPSTYKDDFNVDYPFFSEAPNFADQTGVFEYFTNMEDPGEHHFTLRQVLNQRPITWAADASNTISIIGDYNWTNLTIKCDVYIETPDTGGVFIAGRVNKGGILIRSARGIFFWIFANGSYRVTGDLAGWIIYALGHVEVTAKTWYTLTLTIKGRFASGMLNDKSLWTDIPVNFPKNGWAAIGTHSFEFAQFDNFHVEATR.

The N-terminal stretch at 1–42 (MAEWLLSASRQRRVKAMTAAAGSAGRAAVPFLLCALLAPGGA) is a signal peptide. T109 contacts substrate. N-linked (GlcNAc...) asparagine glycosylation occurs at N143. W151 and N197 together coordinate substrate. Catalysis depends on E198, which acts as the Proton donor/acceptor. The active-site Nucleophile is E274. A disulfide bond links C287 and C394. The N-linked (GlcNAc...) asparagine glycan is linked to N379. R396 is a substrate binding site. Residues N403, N451, N556, N559, and N602 are each glycosylated (N-linked (GlcNAc...) asparagine).

It belongs to the glycosyl hydrolase 59 family.

The protein resides in the lysosome. It carries out the reaction a beta-D-galactosyl-(1&lt;-&gt;1')-N-acylsphing-4-enine + H2O = an N-acylsphing-4-enine + D-galactose. The enzyme catalyses beta-D-galactosyl-(1&lt;-&gt;1)-sphing-4-enine + H2O = sphing-4-enine + D-galactose. The catalysed reaction is a D-galactosylceramide + H2O = an N-acyl-sphingoid base + D-galactose. Functionally, hydrolyzes the galactose ester bonds of glycolipids such as galactosylceramide and galactosylsphingosine. Enzyme with very low activity responsible for the lysosomal catabolism of galactosylceramide, a major lipid in myelin, kidney and epithelial cells of small intestine and colon. The polypeptide is Galactocerebrosidase (Macaca mulatta (Rhesus macaque)).